The following is a 2315-amino-acid chain: Receptor-type tyrosine-protein phosphatase zeta (2315 aa).

The first 24 residues, 1-24 (MRILKRFLACIQLLCVCRLDWANG), serve as a signal peptide directing secretion. Over 25–1636 (YYRQQRKLVE…LAEGLESEKK (1612 aa)) the chain is Extracellular. The 265-residue stretch at 36–300 (IGWSYTGALN…KFSRQVFSSY (265 aa)) folds into the Alpha-carbonic anhydrase domain. 2 disulfides stabilise this stretch: C56–C240 and C133–C264. Residues N105, N134, N223, N232, N324, and N381 are each glycosylated (N-linked (GlcNAc...) asparagine). A Fibronectin type-III domain is found at 314–413 (EPENVQADPE…LIVDMPTDNP (100 aa)). Disordered stretches follow at residues 442 to 462 (IVNPGRDSATNQIRKKEPQIS) and 477 to 507 (AKTNRSPTRGSEFSGKGDVPNTSLNSTSQPV). Over residues 496-507 (PNTSLNSTSQPV) the composition is skewed to polar residues. N497, N501, and N552 each carry an N-linked (GlcNAc...) asparagine glycan. Residue S587 is glycosylated (O-linked (Xyl...) (chondroitin sulfate) serine). 2 N-linked (GlcNAc...) asparagine glycosylation sites follow: N602 and N629. A disordered region spans residues 628–650 (RNASEDSTSSGSEESLKDPSMEG). At S637 the chain carries Phosphoserine; alternate. S637 carries O-linked (Xyl...) (chondroitin sulfate) serine; alternate glycosylation. At S639 the chain carries Phosphoserine. N-linked (GlcNAc...) asparagine glycosylation occurs at N677. Residue S997 is glycosylated (O-linked (Xyl...) (chondroitin sulfate) serine). Residues N1017, N1050, N1082, and N1122 are each glycosylated (N-linked (GlcNAc...) asparagine). Over residues 1123–1138 (FSVQPTHTVSQASGDT) the composition is skewed to polar residues. 4 disordered regions span residues 1123–1160 (FSVQPTHTVSQASGDTSLKPVLSANSEPASSDPASSEM), 1397–1523 (KATS…EEND), 1543–1572 (LTSDEESGSGQGTSDSLNENETSTDFSFAD), and 1584–1621 (AGDSEITPGFPQSPTSSVTSENSEVFHVSEAEASNSSH). Residues 1145–1159 (SANSEPASSDPASSE) show a composition bias toward low complexity. Over residues 1417 to 1432 (EDGDTDDDGDDDDDDR) the composition is skewed to acidic residues. Over residues 1450 to 1465 (ESQEKVMNDSDTHENS) the composition is skewed to basic and acidic residues. N-linked (GlcNAc...) asparagine glycosylation occurs at N1457. 2 stretches are compositionally biased toward polar residues: residues 1466–1479 (LMDQNNPISYSLSE) and 1487–1513 (VTSVSSDSQTGMDRSPGKSPSANGLSQ). 2 O-linked (Xyl...) (chondroitin sulfate) serine glycosylation sites follow: S1549 and S1551. Composition is skewed to polar residues over residues 1554 to 1572 (GTSDSLNENETSTDFSFAD) and 1593 to 1606 (FPQSPTSSVTSENS). N-linked (GlcNAc...) asparagine glycosylation is present at N1562. A glycan (N-linked (GlcNAc...) asparagine) is linked at N1618. Residues 1637–1662 (AVIPLVIVSALTFICLVVLVGILIYW) traverse the membrane as a helical segment. Residues 1663–2315 (RKCFQTAHFY…NIAESLESLV (653 aa)) are Cytoplasmic-facing. Phosphothreonine occurs at positions 1684 and 1687. Tyrosine-protein phosphatase domains are found at residues 1717–1992 (FTEE…LVEA) and 2023–2282 (LEKQ…ILSL). Substrate contacts are provided by residues D1901, 1933–1939 (CSAGVGR), and Q1977. Residue C1933 is the Phosphocysteine intermediate of the active site. Phosphoserine is present on S2055.

Belongs to the protein-tyrosine phosphatase family. Receptor class 5 subfamily. In terms of assembly, the carbonic-anhydrase like domain interacts with CNTN1 (contactin). Interacts with PTN. Interaction with PTN promotes formation of homooligomers; oligomerization impairs phosphatase activity. Interacts (via chondroitin sulfate chains) with MDK (via C-terminal); this interaction is inhibited by PTN; this interaction promotes neuronal migration. Specifically expressed in the central nervous system, where it is localized in the Purkinje cell layer of the cerebellum, the dentate gyrus, and the subependymal layer of the anterior horn of the lateral ventricle. Developmentally regulated in the brain.

The protein localises to the cell membrane. It is found in the secreted. It catalyses the reaction O-phospho-L-tyrosyl-[protein] + H2O = L-tyrosyl-[protein] + phosphate. Functionally, protein tyrosine phosphatase that negatively regulates oligodendrocyte precursor proliferation in the embryonic spinal cord. Required for normal differentiation of the precursor cells into mature, fully myelinating oligodendrocytes. May play a role in protecting oligondendrocytes against apoptosis. May play a role in the establishment of contextual memory, probably via the dephosphorylation of proteins that are part of important signaling cascades. The sequence is that of Receptor-type tyrosine-protein phosphatase zeta (PTPRZ1) from Homo sapiens (Human).